Reading from the N-terminus, the 407-residue chain is Zinc finger protein 552 (407 aa).

A KRAB domain is found at 14 to 90 (VTFEDVAVKF…PMAGVSPKKA (77 aa)). The segment at 91 to 113 (HPCEMCGPILGDILHVADHQGTH) adopts a C2H2-type 1 zinc-finger fold. The C2H2-type 2; degenerate zinc finger occupies 119-141 (HRCEAWGNKLYDSGNFHQHQNEH). Glycyl lysine isopeptide (Lys-Gly) (interchain with G-Cter in SUMO2) cross-links involve residues K176 and K198. A C2H2-type 3; degenerate zinc finger spans residues 212–234 (YSCGGCMKHFSTKDILSQHERLL). The segment at 244–262 (ECGKSSSKYDSFSNHQGVH) adopts a C2H2-type 4; degenerate zinc-finger fold. Residues K251 and K266 each participate in a glycyl lysine isopeptide (Lys-Gly) (interchain with G-Cter in SUMO2) cross-link. 5 consecutive C2H2-type zinc fingers follow at residues 268 to 290 (YTCG…QRIH), 296 to 318 (YECE…QRVH), 324 to 346 (YECS…KRVH), 352 to 374 (YECS…RRVH), and 380 to 402 (YGCS…QRVH). K308 is covalently cross-linked (Glycyl lysine isopeptide (Lys-Gly) (interchain with G-Cter in SUMO2)).

Belongs to the krueppel C2H2-type zinc-finger protein family.

The protein localises to the nucleus. Functionally, may be involved in transcriptional regulation. The chain is Zinc finger protein 552 (ZNF552) from Homo sapiens (Human).